A 713-amino-acid polypeptide reads, in one-letter code: Signal transducer and activator of transcription 1 (713 aa).

The 98-residue stretch at 477-574 folds into the SH2 domain; the sequence is WCIGFISKHD…EEMLRYFESE (98 aa).

This sequence belongs to the transcription factor STAT family. In terms of assembly, forms a homodimer or a heterodimer with a related family member.

The protein localises to the cytoplasm. Its subcellular location is the nucleus. Carries out a dual function: signal transduction and activation of transcription. Activated STAT proteins play a role in repression of dauer formation. Neuronal expression is held in check by negative signals through the TGF-beta pathway that target the daf-3 transcription factor. The polypeptide is Signal transducer and activator of transcription 1 (Caenorhabditis briggsae).